Consider the following 251-residue polypeptide: CDP-diacylglycerol pyrophosphatase (251 aa).

Residues 4–24 (AGLLFLVMIVIAVVAAGIGYW) form a helical membrane-spanning segment.

The protein belongs to the Cdh family.

Its subcellular location is the cell inner membrane. The catalysed reaction is a CDP-1,2-diacyl-sn-glycerol + H2O = a 1,2-diacyl-sn-glycero-3-phosphate + CMP + 2 H(+). It participates in phospholipid metabolism; CDP-diacylglycerol degradation; phosphatidate from CDP-diacylglycerol: step 1/1. This chain is CDP-diacylglycerol pyrophosphatase, found in Escherichia coli O9:H4 (strain HS).